A 241-amino-acid chain; its full sequence is GPI-anchored hemophore RBT5 (241 aa).

Residues 1–20 (MLALSLLSIVSIASAAGVTA) form the signal peptide. The region spanning 26–137 (NPYTIFPSVA…DALAKAADAA (112 aa)) is the CFEM domain. Cystine bridges form between Cys54-Cys94, Cys58-Cys89, Cys68-Cys75, and Cys77-Cys110. Asp72 contacts heme. Low complexity-rich tracts occupy residues 140-154 (TTAESTTAESTAAET) and 163-182 (KETTAAETSKAAESSAPAET). The segment at 140–210 (TTAESTTAES…SVAQSSSSAA (71 aa)) is disordered. Residues 183–199 (SKAEETSKAAETTKAEE) are compositionally biased toward basic and acidic residues. Over residues 200–210 (SSVAQSSSSAA) the composition is skewed to low complexity. A lipid anchor (GPI-anchor amidated asparagine) is attached at Asn221. Residues 222–241 (AGNMPAVAIGGVIAAVAALF) constitute a propeptide, removed in mature form.

Belongs to the RBT5 family. In terms of assembly, interacts with PGA7. Post-translationally, the GPI-anchor is attached to the protein in the endoplasmic reticulum and serves to target the protein to the cell surface. There, the glucosamine-inositol phospholipid moiety is cleaved off and the GPI-modified mannoprotein is covalently attached via its lipidless GPI glycan remnant to the 1,6-beta-glucan of the outer cell wall layer. In terms of processing, mannosylated.

The protein resides in the secreted. It localises to the cell wall. It is found in the cell membrane. GPI-linked hyphal surface heme-binding protein involved in heme-iron utilization. Heme transfer occurs between PGA7, RBT5 and CSA2 supporting a model in which the 3 CFEM proteins cooperate in a heme-acquisition system and form a cross-cell wall heme-transfer cascade. The ability to acquire iron from host tissues is a major virulence factor of pathogenic microorganisms. Required for biofilm formation. The sequence is that of GPI-anchored hemophore RBT5 from Candida albicans (strain SC5314 / ATCC MYA-2876) (Yeast).